A 488-amino-acid polypeptide reads, in one-letter code: Glycogen synthase (488 aa).

K16 is an ADP-alpha-D-glucose binding site.

The protein belongs to the glycosyltransferase 1 family. Bacterial/plant glycogen synthase subfamily.

It catalyses the reaction [(1-&gt;4)-alpha-D-glucosyl](n) + ADP-alpha-D-glucose = [(1-&gt;4)-alpha-D-glucosyl](n+1) + ADP + H(+). It participates in glycan biosynthesis; glycogen biosynthesis. Functionally, synthesizes alpha-1,4-glucan chains using ADP-glucose. This Marinobacter nauticus (strain ATCC 700491 / DSM 11845 / VT8) (Marinobacter aquaeolei) protein is Glycogen synthase.